Consider the following 463-residue polypeptide: uncharacterized protein (463 aa).

Residues 12–70 (LWQQGSVVELTITGLNHQGEGIGRFNERVVFVPDTAPGDRLEVRLVKVKRNYALAQLLK) form the TRAM domain. 4 residues coordinate [4Fe-4S] cluster: cysteine 83, cysteine 89, cysteine 92, and cysteine 171. Glutamine 295, tyrosine 324, glutamate 345, and aspartate 390 together coordinate S-adenosyl-L-methionine. Residue cysteine 417 is the Nucleophile of the active site.

It belongs to the class I-like SAM-binding methyltransferase superfamily. RNA M5U methyltransferase family.

This is an uncharacterized protein from Synechocystis sp. (strain ATCC 27184 / PCC 6803 / Kazusa).